A 456-amino-acid polypeptide reads, in one-letter code: UDP-N-acetylmuramoylalanine--D-glutamate ligase (456 aa).

122 to 128 provides a ligand contact to ATP; sequence GSNGKST.

The protein belongs to the MurCDEF family.

It is found in the cytoplasm. The enzyme catalyses UDP-N-acetyl-alpha-D-muramoyl-L-alanine + D-glutamate + ATP = UDP-N-acetyl-alpha-D-muramoyl-L-alanyl-D-glutamate + ADP + phosphate + H(+). It functions in the pathway cell wall biogenesis; peptidoglycan biosynthesis. In terms of biological role, cell wall formation. Catalyzes the addition of glutamate to the nucleotide precursor UDP-N-acetylmuramoyl-L-alanine (UMA). In Saccharophagus degradans (strain 2-40 / ATCC 43961 / DSM 17024), this protein is UDP-N-acetylmuramoylalanine--D-glutamate ligase.